We begin with the raw amino-acid sequence, 173 residues long: RNA pyrophosphohydrolase (173 aa).

The Nudix hydrolase domain maps to 6–149 (GFRANVGIIL…KRSVYRRALQ (144 aa)). The Nudix box motif lies at 38–59 (GGIDRGETPMDAMYRELWEEVG).

This sequence belongs to the Nudix hydrolase family. RppH subfamily. It depends on a divalent metal cation as a cofactor.

In terms of biological role, accelerates the degradation of transcripts by removing pyrophosphate from the 5'-end of triphosphorylated RNA, leading to a more labile monophosphorylated state that can stimulate subsequent ribonuclease cleavage. The sequence is that of RNA pyrophosphohydrolase from Psychrobacter cryohalolentis (strain ATCC BAA-1226 / DSM 17306 / VKM B-2378 / K5).